Consider the following 365-residue polypeptide: Caffeic acid 3-O-methyltransferase 1 (365 aa).

130–136 (MNQDKVL) serves as a coordination point for substrate. The interval 162–180 (AFEYHGTDPRFNKVFNKGM) is substrate binding. S-adenosyl-L-methionine is bound by residues G208, D231, D251, M252, and K265. H269 serves as the catalytic Proton acceptor.

It belongs to the class I-like SAM-binding methyltransferase superfamily. Cation-independent O-methyltransferase family. COMT subfamily. Homodimer. In terms of processing, the N-terminus is blocked. In terms of tissue distribution, xylem.

The catalysed reaction is (E)-caffeate + S-adenosyl-L-methionine = (E)-ferulate + S-adenosyl-L-homocysteine + H(+). The protein operates within aromatic compound metabolism; phenylpropanoid biosynthesis. Its function is as follows. Catalyzes the conversion of caffeic acid to ferulic acid and of 5-hydroxyferulic acid to sinapic acid. The resulting products may subsequently be converted to the corresponding alcohols that are incorporated into lignins. This is Caffeic acid 3-O-methyltransferase 1 (OMT1) from Populus tremuloides (Quaking aspen).